A 171-amino-acid polypeptide reads, in one-letter code: Shikimate kinase (171 aa).

14-19 (GAGKST) is a binding site for ATP. Serine 18 contacts Mg(2+). Substrate is bound by residues aspartate 36, arginine 60, and glycine 82. Arginine 120 provides a ligand contact to ATP. Residue arginine 139 participates in substrate binding. Glutamine 156 is a binding site for ATP.

It belongs to the shikimate kinase family. In terms of assembly, monomer. Mg(2+) serves as cofactor.

It is found in the cytoplasm. The catalysed reaction is shikimate + ATP = 3-phosphoshikimate + ADP + H(+). Its pathway is metabolic intermediate biosynthesis; chorismate biosynthesis; chorismate from D-erythrose 4-phosphate and phosphoenolpyruvate: step 5/7. In terms of biological role, catalyzes the specific phosphorylation of the 3-hydroxyl group of shikimic acid using ATP as a cosubstrate. This is Shikimate kinase from Shewanella baltica (strain OS195).